The following is a 280-amino-acid chain: Polyamine aminopropyltransferase (280 aa).

A PABS domain is found at 3-237 (DVYFMERDPY…YWWSFSVGSK (235 aa)). Residue Gln33 coordinates S-methyl-5'-thioadenosine. Positions 64 and 88 each coordinate spermidine. S-methyl-5'-thioadenosine-binding positions include Asp108 and 139–140 (DG). Asp157 serves as the catalytic Proton acceptor. Position 157-160 (157-160 (DSTD)) interacts with spermidine.

The protein belongs to the spermidine/spermine synthase family. Homodimer or homotetramer.

Its subcellular location is the cytoplasm. It catalyses the reaction S-adenosyl 3-(methylsulfanyl)propylamine + putrescine = S-methyl-5'-thioadenosine + spermidine + H(+). Its pathway is amine and polyamine biosynthesis; spermidine biosynthesis; spermidine from putrescine: step 1/1. Functionally, catalyzes the irreversible transfer of a propylamine group from the amino donor S-adenosylmethioninamine (decarboxy-AdoMet) to putrescine (1,4-diaminobutane) to yield spermidine. The chain is Polyamine aminopropyltransferase from Hydrogenobaculum sp. (strain Y04AAS1).